Here is a 484-residue protein sequence, read N- to C-terminus: Cobyric acid synthase (484 aa).

One can recognise a GATase cobBQ-type domain in the interval 248 to 435 (VLKVIVPVLP…LHGLFEGSQS (188 aa)). The active-site Nucleophile is the C329. Residue H427 is part of the active site.

It belongs to the CobB/CobQ family. CobQ subfamily.

It functions in the pathway cofactor biosynthesis; adenosylcobalamin biosynthesis. Its function is as follows. Catalyzes amidations at positions B, D, E, and G on adenosylcobyrinic A,C-diamide. NH(2) groups are provided by glutamine, and one molecule of ATP is hydrogenolyzed for each amidation. In Pseudomonas putida (strain ATCC 700007 / DSM 6899 / JCM 31910 / BCRC 17059 / LMG 24140 / F1), this protein is Cobyric acid synthase.